We begin with the raw amino-acid sequence, 56 residues long: U-megalopygitoxin(2)-Mo9 (56 aa).

The first 25 residues, 1–25 (MKFIVLLLIVTSVLMMFAVTTEASP), serve as a signal peptide directing secretion. The residue at position 26 (Gln-26) is a Pyrrolidone carboxylic acid. Position 55 is a threonine amide (Thr-55).

The protein belongs to the caterpillar 2 family. Contains 2 disulfide bonds. As to expression, expressed by the venom apparatus.

It localises to the secreted. In terms of biological role, probable toxin. In Megalopyge opercularis (Southern flannel moth), this protein is U-megalopygitoxin(2)-Mo9.